Reading from the N-terminus, the 306-residue chain is tRNA (guanine-N(1)-)-methyltransferase (306 aa).

S-adenosyl-L-methionine is bound by residues G157 and 182–187 (IGDYVL).

It belongs to the RNA methyltransferase TrmD family. In terms of assembly, homodimer.

The protein localises to the cytoplasm. It catalyses the reaction guanosine(37) in tRNA + S-adenosyl-L-methionine = N(1)-methylguanosine(37) in tRNA + S-adenosyl-L-homocysteine + H(+). Its function is as follows. Specifically methylates guanosine-37 in various tRNAs. The polypeptide is tRNA (guanine-N(1)-)-methyltransferase (Bifidobacterium adolescentis (strain ATCC 15703 / DSM 20083 / NCTC 11814 / E194a)).